A 154-amino-acid chain; its full sequence is Myoglobin (154 aa).

The 147-residue stretch at 2 to 148 (VLTDAEWHLV…FRKDIAAKYK (147 aa)) folds into the Globin domain. His-65 lines the nitrite pocket. His-65 lines the O2 pocket. At Thr-68 the chain carries Phosphothreonine. Heme b is bound at residue His-94.

It belongs to the globin family. In terms of assembly, monomeric.

Its subcellular location is the cytoplasm. The protein resides in the sarcoplasm. The enzyme catalyses Fe(III)-heme b-[protein] + nitric oxide + H2O = Fe(II)-heme b-[protein] + nitrite + 2 H(+). It catalyses the reaction H2O2 + AH2 = A + 2 H2O. Monomeric heme protein which primary function is to store oxygen and facilitate its diffusion within muscle tissues. Reversibly binds oxygen through a pentacoordinated heme iron and enables its timely and efficient release as needed during periods of heightened demand. Depending on the oxidative conditions of tissues and cells, and in addition to its ability to bind oxygen, it also has a nitrite reductase activity whereby it regulates the production of bioactive nitric oxide. Under stress conditions, like hypoxia and anoxia, it also protects cells against reactive oxygen species thanks to its pseudoperoxidase activity. This is Myoglobin (MB) from Balaenoptera physalus (Fin whale).